The following is a 127-amino-acid chain: Large ribosomal subunit protein uL22 (127 aa).

The protein belongs to the universal ribosomal protein uL22 family. As to quaternary structure, part of the 50S ribosomal subunit.

In terms of biological role, this protein binds specifically to 23S rRNA; its binding is stimulated by other ribosomal proteins, e.g. L4, L17, and L20. It is important during the early stages of 50S assembly. It makes multiple contacts with different domains of the 23S rRNA in the assembled 50S subunit and ribosome. The globular domain of the protein is located near the polypeptide exit tunnel on the outside of the subunit, while an extended beta-hairpin is found that lines the wall of the exit tunnel in the center of the 70S ribosome. The protein is Large ribosomal subunit protein uL22 of Methylorubrum extorquens (strain CM4 / NCIMB 13688) (Methylobacterium extorquens).